A 435-amino-acid chain; its full sequence is Protein CHLOROPLAST IMPORT APPARATUS 2 (435 aa).

The transit peptide at 1–59 directs the protein to the chloroplast; the sequence is MSACLSSGGGGAAAYSFELEKVKSPPPSSSTTTTRATSPSSTISESSNSPLAISTRKPR. Disordered regions lie at residues 21–66 and 412–435; these read KVKS…KRPN and ADQR…SGQR. Residues 29–49 are compositionally biased toward low complexity; it reads SSTTTTRATSPSSTISESSNS. Basic residues predominate over residues 56–65; it reads RKPRTQRKRP. A CCT domain is found at 383-425; that stretch reads REASVLRYKEKRRTRLFSKKIRYQVRKLNADQRPRMKGRFVRR.

Expressed in leaves and young flower buds.

The protein localises to the plastid. It is found in the chloroplast. It localises to the nucleus. Responsible for specific up-regulation of the translocon genes TOC33 and TOC75 in leaves. Involved in the general chloroplast protein import pathway regulation, including protein import and protein translation efficiencies. The chain is Protein CHLOROPLAST IMPORT APPARATUS 2 (CIA2) from Arabidopsis thaliana (Mouse-ear cress).